Consider the following 530-residue polypeptide: Vesicular acetylcholine transporter (530 aa).

At 1–33 (MEPTAPTGQARAAATKLSEAVGAALQEPQRQRR) the chain is on the cytoplasmic side. Residues 34 to 54 (LVLVIVCVALLLDNMLYMVIV) form a helical membrane-spanning segment. The Lumenal, vesicle segment spans residues 55–125 (PIVPDYIAHM…PTESEDVKIG (71 aa)). N-linked (GlcNAc...) asparagine glycans are attached at residues asparagine 89 and asparagine 96. A helical transmembrane segment spans residues 126–146 (VLFASKAILQLLVNPLSGPFI). The Cytoplasmic portion of the chain corresponds to 147 to 152 (DRMSYD). The helical transmembrane segment at 153-173 (VPLLIGLGVMFASTVMFAFAE) threads the bilayer. Over 174 to 182 (DYATLFAAR) the chain is Lumenal, vesicle. A helical membrane pass occupies residues 183–203 (SLQGLGSAFADTSGIAMIADK). Residues 204 to 213 (YPEEPERSRA) are Cytoplasmic-facing. Residues 214 to 234 (LGVALAFISFGSLVAPPFGGI) form a helical membrane-spanning segment. The Lumenal, vesicle portion of the chain corresponds to 235-242 (LYEFAGKR). Residues 243-263 (VPFLVLAAVSLFDALLLLAVA) traverse the membrane as a helical segment. Residues 264–289 (KPFSAAARARANLPVGTPIHRLMLDP) are Cytoplasmic-facing. A helical membrane pass occupies residues 290-310 (YIAVVAGALTTCNIPLAFLEP). The Lumenal, vesicle portion of the chain corresponds to 311–325 (TIATWMKHTMAASEW). The helical transmembrane segment at 326-346 (EMGMVWLPAFVPHVLGVYLTV) threads the bilayer. At 347-356 (RLAARYPHLQ) the chain is on the cytoplasmic side. A helical transmembrane segment spans residues 357-377 (WLYGALGLAVIGVSSCVVPAC). The Lumenal, vesicle segment spans residues 378–388 (RSFAPLVVSLC). The helical transmembrane segment at 389 to 409 (GLCFGIALVDTALLPTLAFLV) threads the bilayer. Residues 410–422 (DVRHVSVYGSVYA) lie on the Cytoplasmic side of the membrane. The chain crosses the membrane as a helical span at residues 423-443 (IADISYSVAYALGPIVAGHIV). Topologically, residues 444-447 (HSLG) are lumenal, vesicle. The chain crosses the membrane as a helical span at residues 448–468 (FEQLSLGMGLANLLYAPVLLL). Over 469–530 (LRNVGLLTRS…EDDYNYYSRS (62 aa)) the chain is Cytoplasmic. Residues 471 to 530 (NVGLLTRSRSERDVLLDEPPQGLYDAVRLREVQGKDGGEPCSPPGPFDGCEDDYNYYSRS) are mediates interaction with SEC14L1. Positions 504–530 (GKDGGEPCSPPGPFDGCEDDYNYYSRS) are disordered.

The protein belongs to the major facilitator superfamily. Vesicular transporter family. In terms of assembly, interacts with SEC14L1. In terms of tissue distribution, high expression in all major cholinergic cell groups, including peripheral postganglionic parasympathetic cells, preganglionic sympathetic and parasympathetic cells, ventral spinal cord and brainstem motoneurons, cell groups in the basal forebrain, the habenula and the corpus striatum. Weakly expressed in the cortex and hippocampus.

The protein localises to the cytoplasmic vesicle. It localises to the secretory vesicle. The protein resides in the synaptic vesicle membrane. It carries out the reaction acetylcholine(out) + 2 H(+)(in) = acetylcholine(in) + 2 H(+)(out). It catalyses the reaction choline(in) + 2 H(+)(out) = choline(out) + 2 H(+)(in). The enzyme catalyses serotonin(in) + 2 H(+)(out) = serotonin(out) + 2 H(+)(in). Potently inhibited by L-vesamicol. Its function is as follows. Electrogenic antiporter that exchanges one cholinergic neurotransmitter, acetylcholine or choline, with two intravesicular protons across the membrane of synaptic vesicles. Uses the electrochemical proton gradient established by the V-type proton-pump ATPase to store neurotransmitters inside the vesicles prior to their release via exocytosis. Determines cholinergic vesicular quantal size at presynaptic nerve terminals in developing neuro-muscular junctions with an impact on motor neuron differentiation and innervation pattern. Part of forebrain cholinergic system, regulates hippocampal synapse transmissions that underlie spatial memory formation. Can transport serotonin. This Rattus norvegicus (Rat) protein is Vesicular acetylcholine transporter (Slc18a3).